The following is a 250-amino-acid chain: Ubiquinone/menaquinone biosynthesis C-methyltransferase UbiE (250 aa).

S-adenosyl-L-methionine contacts are provided by residues Ser73, Asp94, and 122 to 123 (NA).

It belongs to the class I-like SAM-binding methyltransferase superfamily. MenG/UbiE family.

It catalyses the reaction a 2-demethylmenaquinol + S-adenosyl-L-methionine = a menaquinol + S-adenosyl-L-homocysteine + H(+). The catalysed reaction is a 2-methoxy-6-(all-trans-polyprenyl)benzene-1,4-diol + S-adenosyl-L-methionine = a 5-methoxy-2-methyl-3-(all-trans-polyprenyl)benzene-1,4-diol + S-adenosyl-L-homocysteine + H(+). It functions in the pathway quinol/quinone metabolism; menaquinone biosynthesis; menaquinol from 1,4-dihydroxy-2-naphthoate: step 2/2. Its pathway is cofactor biosynthesis; ubiquinone biosynthesis. Methyltransferase required for the conversion of demethylmenaquinol (DMKH2) to menaquinol (MKH2) and the conversion of 2-polyprenyl-6-methoxy-1,4-benzoquinol (DDMQH2) to 2-polyprenyl-3-methyl-6-methoxy-1,4-benzoquinol (DMQH2). This Legionella pneumophila (strain Lens) protein is Ubiquinone/menaquinone biosynthesis C-methyltransferase UbiE.